A 321-amino-acid chain; its full sequence is o-succinylbenzoate synthase (321 aa).

The active-site Proton donor is K134. D162, E191, and D214 together coordinate Mg(2+). K236 acts as the Proton acceptor in catalysis.

This sequence belongs to the mandelate racemase/muconate lactonizing enzyme family. MenC type 1 subfamily. A divalent metal cation serves as cofactor.

The enzyme catalyses (1R,6R)-6-hydroxy-2-succinyl-cyclohexa-2,4-diene-1-carboxylate = 2-succinylbenzoate + H2O. It participates in quinol/quinone metabolism; 1,4-dihydroxy-2-naphthoate biosynthesis; 1,4-dihydroxy-2-naphthoate from chorismate: step 4/7. Its pathway is quinol/quinone metabolism; menaquinone biosynthesis. In terms of biological role, converts 2-succinyl-6-hydroxy-2,4-cyclohexadiene-1-carboxylate (SHCHC) to 2-succinylbenzoate (OSB). This is o-succinylbenzoate synthase from Klebsiella pneumoniae (strain 342).